The chain runs to 366 residues: Cobalt-precorrin-5B C(1)-methyltransferase (366 aa).

It belongs to the CbiD family.

It carries out the reaction Co-precorrin-5B + S-adenosyl-L-methionine = Co-precorrin-6A + S-adenosyl-L-homocysteine. The protein operates within cofactor biosynthesis; adenosylcobalamin biosynthesis; cob(II)yrinate a,c-diamide from sirohydrochlorin (anaerobic route): step 6/10. In terms of biological role, catalyzes the methylation of C-1 in cobalt-precorrin-5B to form cobalt-precorrin-6A. The polypeptide is Cobalt-precorrin-5B C(1)-methyltransferase (Thermoanaerobacter sp. (strain X514)).